The chain runs to 210 residues: Shikimate kinase (210 aa).

Gly-34–Val-39 is a binding site for ATP. Ser-38 lines the Mg(2+) pocket. Substrate-binding residues include Asp-56, Arg-80, and Gly-102. Residue Arg-140 coordinates ATP. Arg-159 contributes to the substrate binding site.

It belongs to the shikimate kinase family. As to quaternary structure, monomer. It depends on Mg(2+) as a cofactor.

It is found in the cytoplasm. It catalyses the reaction shikimate + ATP = 3-phosphoshikimate + ADP + H(+). Its pathway is metabolic intermediate biosynthesis; chorismate biosynthesis; chorismate from D-erythrose 4-phosphate and phosphoenolpyruvate: step 5/7. Functionally, catalyzes the specific phosphorylation of the 3-hydroxyl group of shikimic acid using ATP as a cosubstrate. The chain is Shikimate kinase from Bartonella henselae (strain ATCC 49882 / DSM 28221 / CCUG 30454 / Houston 1) (Rochalimaea henselae).